Here is a 160-residue protein sequence, read N- to C-terminus: Transcription elongation factor GreA (160 aa).

A coiled-coil region spans residues 1 to 31 (MAEKTYPMTLEEKEKLEKELEELKLVRRPEI).

It belongs to the GreA/GreB family.

Its function is as follows. Necessary for efficient RNA polymerase transcription elongation past template-encoded arresting sites. The arresting sites in DNA have the property of trapping a certain fraction of elongating RNA polymerases that pass through, resulting in locked ternary complexes. Cleavage of the nascent transcript by cleavage factors such as GreA or GreB allows the resumption of elongation from the new 3'terminus. GreA releases sequences of 2 to 3 nucleotides. The chain is Transcription elongation factor GreA from Streptococcus suis (strain 98HAH33).